The following is a 722-amino-acid chain: PAB1-binding protein 1 (722 aa).

Basic and acidic residues predominate over residues 1–10; sequence MKGNFRKRDS. Residues 1-38 are disordered; sequence MKGNFRKRDSSTNSRKGGNSDSNYTNGGVPNQNNSSMF. The span at 11 to 38 shows a compositional bias: polar residues; it reads STNSRKGGNSDSNYTNGGVPNQNNSSMF. Positions 51 to 107 constitute a Sm domain; it reads RQDYLLANSIGSDVTVTVTSGVKYTGLLVSCNLESTNGIDVVLRFPRVADSGVSDSV. Phosphoserine is present on Ser-106. Thr-193 bears the Phosphothreonine mark. Phosphoserine is present on Ser-215. 3 disordered regions span residues 305–380, 412–488, and 683–722; these read ALKS…LSSK, SSTL…NPHT, and GSGP…SGHK. 4 stretches are compositionally biased toward low complexity: residues 307–316, 338–347, 356–370, and 412–421; these read KSNSKPNSNK, SSSNSNKNEN, PAAA…PQKT, and SSTLKSNSSL. Lys-344 participates in a covalent cross-link: Glycyl lysine isopeptide (Lys-Gly) (interchain with G-Cter in ubiquitin). The span at 429–455 shows a compositional bias: polar residues; sequence TPSAKTVSPTTQISAGKSESRRSGSNI. Phosphoserine is present on Ser-436. Residues 456–471 show a composition bias toward low complexity; sequence SQGQSSTGHTTRSSTS. Over residues 698 to 722 the composition is skewed to basic residues; it reads SHGHSRNYHQTSHHGHHNSSTSGHK.

The protein belongs to the ataxin-2 family. Interacts (via C-terminus) with MKT1 (via C-terminus). Interacts with FIR1, IGO1, LSM12, PBP4 and PAB1.

Its subcellular location is the cytoplasm. The protein resides in the nucleus. It localises to the mitochondrion. Its function is as follows. Involved in pre-mRNA polyadenylation. May act to repress the ability of PAB1 to negatively regulate polyadenylation. Negative regulator of poly(A) nuclease (PAN) activity. Promotes mating-type switching in mother cells by positively regulating HO mRNA translation. Localizes MKT1 to polysomes. The polypeptide is PAB1-binding protein 1 (PBP1) (Saccharomyces cerevisiae (strain ATCC 204508 / S288c) (Baker's yeast)).